The primary structure comprises 26 residues: GTP-binding protein Rheb (26 aa).

The GTP site is built by Ser1, Ser2, Val13, Tyr16, and Thr19. Position 1 (Ser1) interacts with Mg(2+). Positions 16 to 24 (YDPTIENTF) match the Effector region motif. Thr19 is a binding site for Mg(2+).

Belongs to the small GTPase superfamily. Rheb family.

It catalyses the reaction GTP + H2O = GDP + phosphate + H(+). Its function is as follows. Binds GTP and exhibits intrinsic GTPase activity. The sequence is that of GTP-binding protein Rheb from Crocodylus siamensis (Siamese crocodile).